Consider the following 407-residue polypeptide: Arrestin domain-containing protein 2 (407 aa).

It belongs to the arrestin family. As to quaternary structure, interacts with WWP1 (via WW domains).

The polypeptide is Arrestin domain-containing protein 2 (ARRDC2) (Homo sapiens (Human)).